The following is a 224-amino-acid chain: LexA repressor (224 aa).

The H-T-H motif DNA-binding region spans 29–49; it reads RAEIARALGFRSPNAAEDHLK. Catalysis depends on for autocatalytic cleavage activity residues Ser142 and Lys179.

Belongs to the peptidase S24 family. As to quaternary structure, homodimer.

The enzyme catalyses Hydrolysis of Ala-|-Gly bond in repressor LexA.. In terms of biological role, represses a number of genes involved in the response to DNA damage (SOS response), including recA and lexA. In the presence of single-stranded DNA, RecA interacts with LexA causing an autocatalytic cleavage which disrupts the DNA-binding part of LexA, leading to derepression of the SOS regulon and eventually DNA repair. The sequence is that of LexA repressor from Bordetella petrii (strain ATCC BAA-461 / DSM 12804 / CCUG 43448).